The primary structure comprises 429 residues: 3-isopropylmalate dehydratase large subunit (429 aa).

[4Fe-4S] cluster-binding residues include Cys303, Cys363, and Cys366.

It belongs to the aconitase/IPM isomerase family. LeuC type 2 subfamily. As to quaternary structure, heterodimer of LeuC and LeuD. Requires [4Fe-4S] cluster as cofactor.

It catalyses the reaction (2R,3S)-3-isopropylmalate = (2S)-2-isopropylmalate. It functions in the pathway amino-acid biosynthesis; L-leucine biosynthesis; L-leucine from 3-methyl-2-oxobutanoate: step 2/4. In terms of biological role, catalyzes the isomerization between 2-isopropylmalate and 3-isopropylmalate, via the formation of 2-isopropylmaleate. This is 3-isopropylmalate dehydratase large subunit from Caldicellulosiruptor bescii (strain ATCC BAA-1888 / DSM 6725 / KCTC 15123 / Z-1320) (Anaerocellum thermophilum).